Consider the following 220-residue polypeptide: Cytidylate kinase (220 aa).

9–17 (GPAASGKST) contacts ATP.

Belongs to the cytidylate kinase family. Type 1 subfamily.

It is found in the cytoplasm. The enzyme catalyses CMP + ATP = CDP + ADP. The catalysed reaction is dCMP + ATP = dCDP + ADP. The chain is Cytidylate kinase from Thermotoga petrophila (strain ATCC BAA-488 / DSM 13995 / JCM 10881 / RKU-1).